Consider the following 365-residue polypeptide: D-alanine--D-alanine ligase (365 aa).

The region spanning 140-346 (KKILRRHGLQ…YSQLLTDLIY (207 aa)) is the ATP-grasp domain. 173–228 (EKQLSYPIFVKPANLGSSVGISKVKNREELIQGIDLAVKYDMKCLAEEFIPGKEIE) lines the ATP pocket. Residues aspartate 299, glutamate 313, and asparagine 315 each contribute to the Mg(2+) site.

It belongs to the D-alanine--D-alanine ligase family. Requires Mg(2+) as cofactor. The cofactor is Mn(2+).

It localises to the cytoplasm. The enzyme catalyses 2 D-alanine + ATP = D-alanyl-D-alanine + ADP + phosphate + H(+). It functions in the pathway cell wall biogenesis; peptidoglycan biosynthesis. Its function is as follows. Cell wall formation. This chain is D-alanine--D-alanine ligase, found in Natranaerobius thermophilus (strain ATCC BAA-1301 / DSM 18059 / JW/NM-WN-LF).